The sequence spans 189 residues: Elongation factor P 2 (189 aa).

This sequence belongs to the elongation factor P family.

Its subcellular location is the cytoplasm. It functions in the pathway protein biosynthesis; polypeptide chain elongation. Functionally, involved in peptide bond synthesis. Stimulates efficient translation and peptide-bond synthesis on native or reconstituted 70S ribosomes in vitro. Probably functions indirectly by altering the affinity of the ribosome for aminoacyl-tRNA, thus increasing their reactivity as acceptors for peptidyl transferase. The polypeptide is Elongation factor P 2 (Lactobacillus acidophilus (strain ATCC 700396 / NCK56 / N2 / NCFM)).